Here is a 240-residue protein sequence, read N- to C-terminus: tRNA (guanine-N(1)-)-methyltransferase (240 aa).

S-adenosyl-L-methionine contacts are provided by residues glycine 110 and 130–135 (VGDYVL).

This sequence belongs to the RNA methyltransferase TrmD family. In terms of assembly, homodimer.

The protein resides in the cytoplasm. It carries out the reaction guanosine(37) in tRNA + S-adenosyl-L-methionine = N(1)-methylguanosine(37) in tRNA + S-adenosyl-L-homocysteine + H(+). In terms of biological role, specifically methylates guanosine-37 in various tRNAs. The chain is tRNA (guanine-N(1)-)-methyltransferase from Borrelia recurrentis (strain A1).